Here is a 354-residue protein sequence, read N- to C-terminus: Protein REDOX 1 (354 aa).

Position 44 (Cys44) interacts with Zn(2+). 45–49 is a binding site for NAD(+); the sequence is HSDLH. Residues His66, Cys97, Cys100, Cys103, and Cys111 each contribute to the Zn(2+) site. NAD(+) contacts are provided by residues 185–190, Lys214, 271–273, 295–297, and Arg340; these read GLGGLG, VGA, and SAV.

Belongs to the zinc-containing alcohol dehydrogenase family. It depends on Zn(2+) as a cofactor. As to expression, expressed in leaf epidermis.

It carries out the reaction 3,17-didehydrostemmadenine + NADPH + H2O = (16S)-deshydroxymethyl-stemmadenine + formate + NADP(+). It catalyses the reaction 3,17-didehydrostemmadenine + NADPH + H2O = (16R)-deshydroxymethyl-stemmadenine + formate + NADP(+). The enzyme catalyses 17-dehydrostemmadenine + NADP(+) = 3,17-didehydrostemmadenine + NADPH. It functions in the pathway alkaloid biosynthesis. Its function is as follows. Component of iboga and aspidosperma monoterpenoid indole alkaloids (MIAs, e.g. tabersonine and catharanthine) biosynthesis pathway from 19E-geissoschizine. Catalyzes the first oxidation step of the unstable intermediate product resulting from the reaction triggered by the geissoschizine oxidase (GO) in the stemmadenine biosynthesis process from 19E-geissoschizine. This is Protein REDOX 1 from Catharanthus roseus (Madagascar periwinkle).